Here is an 84-residue protein sequence, read N- to C-terminus: Small ribosomal subunit protein bS16 (84 aa).

Belongs to the bacterial ribosomal protein bS16 family.

This is Small ribosomal subunit protein bS16 from Koribacter versatilis (strain Ellin345).